A 433-amino-acid chain; its full sequence is Chaperone SurA (433 aa).

A signal peptide spans 1 to 24 (MDGIKLLLSIIILYFYTYINCAIA). PpiC domains lie at 173–274 (NTTF…KVHD) and 285–385 (ITEV…QLQN).

It localises to the periplasm. It catalyses the reaction [protein]-peptidylproline (omega=180) = [protein]-peptidylproline (omega=0). Chaperone involved in the correct folding and assembly of outer membrane proteins. Recognizes specific patterns of aromatic residues and the orientation of their side chains, which are found more frequently in integral outer membrane proteins. May act in both early periplasmic and late outer membrane-associated steps of protein maturation. This chain is Chaperone SurA, found in Baumannia cicadellinicola subsp. Homalodisca coagulata.